Here is a 117-residue protein sequence, read N- to C-terminus: Large ribosomal subunit protein uL18 (117 aa).

The protein belongs to the universal ribosomal protein uL18 family. Part of the 50S ribosomal subunit; part of the 5S rRNA/L5/L18/L25 subcomplex. Contacts the 5S and 23S rRNAs.

This is one of the proteins that bind and probably mediate the attachment of the 5S RNA into the large ribosomal subunit, where it forms part of the central protuberance. The chain is Large ribosomal subunit protein uL18 from Polynucleobacter asymbioticus (strain DSM 18221 / CIP 109841 / QLW-P1DMWA-1) (Polynucleobacter necessarius subsp. asymbioticus).